Reading from the N-terminus, the 523-residue chain is Peptide chain release factor 3 (523 aa).

A tr-type G domain is found at 8–275 (KKRRTFAIIS…TFLEYAPEPH (268 aa)). GTP-binding positions include 17–24 (SHPDAGKT), 85–89 (DTPGH), and 139–142 (NKLD).

The protein belongs to the TRAFAC class translation factor GTPase superfamily. Classic translation factor GTPase family. PrfC subfamily.

It localises to the cytoplasm. In terms of biological role, increases the formation of ribosomal termination complexes and stimulates activities of RF-1 and RF-2. It binds guanine nucleotides and has strong preference for UGA stop codons. It may interact directly with the ribosome. The stimulation of RF-1 and RF-2 is significantly reduced by GTP and GDP, but not by GMP. This is Peptide chain release factor 3 from Lactococcus lactis subsp. cremoris (strain SK11).